The sequence spans 257 residues: Protein YIPF5 (257 aa).

Residues 1-124 (MSGFDNLNSG…RASDGSIMNE (124 aa)) are Cytoplasmic-facing. Positions 75 to 106 (PPTPQTFYGDSFEEEPPLLEELGINFDHIWQK) are interaction with Sec23. Residues 125–145 (TDLAGPVVFCLAFGATLLLAG) form a helical membrane-spanning segment. A topological domain (lumenal) is located at residue Lys146. The helical transmembrane segment at 147-167 (IQFGYVYGISAIGCLGMFCLL) threads the bilayer. Over 168–173 (NLMSMT) the chain is Cytoplasmic. A helical transmembrane segment spans residues 174 to 194 (GVSFGCVASVLGYCLLPMILL). Topologically, residues 195–196 (SS) are lumenal. A helical transmembrane segment spans residues 197–217 (FAVVFSLQGMVGILLTATIIG). Over 218–236 (WCSFSASKIFISALAMDGQ) the chain is Cytoplasmic. Residues 237–257 (QLLVAYPCALLYGVFALISVF) traverse the membrane as a helical segment.

It belongs to the YIP1 family. Interacts with the COPII coat components Sec23 (SEC23A and/or SEC23B) and Sec24 (SEC24A and/or SEC24B). Interacts with YIF1A. May interact with RAB1A. Interacts with YIPF3 and YIPF4.

The protein localises to the endoplasmic reticulum membrane. The protein resides in the golgi apparatus. Its subcellular location is the cis-Golgi network membrane. It localises to the cytoplasmic vesicle. It is found in the COPII-coated vesicle. Plays a role in transport between endoplasmic reticulum and Golgi. In pancreatic beta cells, required to transport proinsulin from endoplasmic reticulum into the Golgi. The polypeptide is Protein YIPF5 (Rattus norvegicus (Rat)).